The primary structure comprises 945 residues: Bifunctional glutamine synthetase adenylyltransferase/adenylyl-removing enzyme (945 aa).

The segment at 1–440 (MMPLSPQLQQ…VFNELIGDDE (440 aa)) is adenylyl removase. The adenylyl transferase stretch occupies residues 449 to 945 (AEYWRELWQD…SASWQKWLMA (497 aa)).

It belongs to the GlnE family. Requires Mg(2+) as cofactor.

The catalysed reaction is [glutamine synthetase]-O(4)-(5'-adenylyl)-L-tyrosine + phosphate = [glutamine synthetase]-L-tyrosine + ADP. It catalyses the reaction [glutamine synthetase]-L-tyrosine + ATP = [glutamine synthetase]-O(4)-(5'-adenylyl)-L-tyrosine + diphosphate. In terms of biological role, involved in the regulation of glutamine synthetase GlnA, a key enzyme in the process to assimilate ammonia. When cellular nitrogen levels are high, the C-terminal adenylyl transferase (AT) inactivates GlnA by covalent transfer of an adenylyl group from ATP to specific tyrosine residue of GlnA, thus reducing its activity. Conversely, when nitrogen levels are low, the N-terminal adenylyl removase (AR) activates GlnA by removing the adenylyl group by phosphorolysis, increasing its activity. The regulatory region of GlnE binds the signal transduction protein PII (GlnB) which indicates the nitrogen status of the cell. This is Bifunctional glutamine synthetase adenylyltransferase/adenylyl-removing enzyme from Klebsiella pneumoniae subsp. pneumoniae (strain ATCC 700721 / MGH 78578).